Here is a 66-residue protein sequence, read N- to C-terminus: DNA gyrase inhibitor YacG (66 aa).

Zn(2+) is bound by residues Cys-9, Cys-12, Cys-28, and Cys-32. Positions 45–66 (HKIAGSEESEDELYSGDLEPRH) are disordered.

Belongs to the DNA gyrase inhibitor YacG family. In terms of assembly, interacts with GyrB. Zn(2+) serves as cofactor.

In terms of biological role, inhibits all the catalytic activities of DNA gyrase by preventing its interaction with DNA. Acts by binding directly to the C-terminal domain of GyrB, which probably disrupts DNA binding by the gyrase. The chain is DNA gyrase inhibitor YacG from Pseudomonas putida (strain ATCC 47054 / DSM 6125 / CFBP 8728 / NCIMB 11950 / KT2440).